The following is a 421-amino-acid chain: PDZ and LIM domain protein 7 (421 aa).

Positions 1–85 constitute a PDZ domain; the sequence is MEEYKVTLDG…KLGLVLSRFA (85 aa). The segment at 115–193 is disordered; sequence IARPFGSGTP…STGPAVRPPW (79 aa). Residues 147 to 172 show a composition bias toward polar residues; the sequence is YPSSQMPQGQLQNGQKSRTVSNVSGK. 3 LIM zinc-binding domains span residues 244-302, 303-362, and 363-421; these read PVCS…ARFA, PNCA…MFGT, and KCRG…FSNV.

The protein localises to the cytoplasm. It localises to the cytoskeleton. May function as a scaffold on which the coordinated assembly of proteins can occur. May play a role as an adapter that, via its PDZ domain, localizes LIM-binding proteins to actin filaments of both skeletal muscle and nonmuscle tissues. This chain is PDZ and LIM domain protein 7 (pdlim7), found in Xenopus laevis (African clawed frog).